The following is a 315-amino-acid chain: MAPPRPDYTFTHEHLLGIEGLHPLDIGHILDLADSYAEKTRAGVRPDPVLTGKTVVNLFFETSTRTMSSFEIAARRLGAHVISMPIANSSVKKGETLIDTAMTLNAMKPDALVIRHSASGGAKLLSRKVDCAVINAGDGTHEHPTQALLDLLTIRRVKNRIEGLKVVICGDIAHSRVARSTTMALHLMGARVHLCGPKTLIPPGTETWGAESAGTDFDKVLKGADVVMMLRLQLERMNGSFLPSRREYFRYFGLTAERLALAKPNATVMHPGPMNRGVEIESTIADGPSSVITQQVEMGVAVREAVLHLLAGGKS.

2 residues coordinate carbamoyl phosphate: R65 and T66. K93 provides a ligand contact to L-aspartate. R115, H143, and Q146 together coordinate carbamoyl phosphate. Residues R176 and R231 each contribute to the L-aspartate site. Carbamoyl phosphate contacts are provided by G272 and P273.

The protein belongs to the aspartate/ornithine carbamoyltransferase superfamily. ATCase family. In terms of assembly, heterododecamer (2C3:3R2) of six catalytic PyrB chains organized as two trimers (C3), and six regulatory PyrI chains organized as three dimers (R2).

It carries out the reaction carbamoyl phosphate + L-aspartate = N-carbamoyl-L-aspartate + phosphate + H(+). The protein operates within pyrimidine metabolism; UMP biosynthesis via de novo pathway; (S)-dihydroorotate from bicarbonate: step 2/3. Functionally, catalyzes the condensation of carbamoyl phosphate and aspartate to form carbamoyl aspartate and inorganic phosphate, the committed step in the de novo pyrimidine nucleotide biosynthesis pathway. In Hyphomonas neptunium (strain ATCC 15444), this protein is Aspartate carbamoyltransferase catalytic subunit.